We begin with the raw amino-acid sequence, 99 residues long: RING finger protein Z (99 aa).

Gly2 is lipidated: N-myristoyl glycine; by host. The RING-type; atypical zinc-finger motif lies at 31–67 (CKSCWFENKGLVECNNHYLCLNCLTLLLSVSNRCPIC). Residues 74–99 (KLRPSAAPTAPPTGAADSIRPPPYSP) form a disordered region. Over residues 77–89 (PSAAPTAPPTGAA) the composition is skewed to low complexity. The PTAP/PSAP motif signature appears at 81–84 (PTAP). A PPXY motif motif is present at residues 94-97 (PPPY).

It belongs to the arenaviridae Z protein family. In terms of assembly, interacts with protein NP; this interaction probably directs the encapsidated genome to budding sites. Interacts (via RING domain) with polymerase L; this interaction inhibits viral transcription and replication, Z partially blocks the product exit tunnel for the releasing nascent RNA product. Interacts with the glycoprotein complex; this interaction plays a role in virion budding. Interacts with host eIF4E; this interaction results in eIF4E reduced affinity for its substrate, the 5'-m7 G cap structure. Interacts (via late-budding domain) with host TSG101; this interaction is essential for budding and release of viral particles. Interacts with host RPLP0; this interaction may serve to load ribosome-like particles inside the virion. Interacts with host PML; this interaction induces PML bodies redistribution in the cytoplasm upon viral infection. Interacts with host TAX1BP1. Post-translationally, myristoylation is required for the role of RING finger protein Z in assembly and budding.

The protein resides in the virion. Its subcellular location is the host cytoplasm. It is found in the host perinuclear region. It localises to the host cell membrane. Its function is as follows. Plays a crucial role in virion assembly and budding. Expressed late in the virus life cycle, it acts as an inhibitor of viral transcription and RNA synthesis by interacting with the viral polymerase L. Presumably recruits the NP encapsidated genome to cellular membranes at budding sites via direct interaction with NP. Plays critical roles in the final steps of viral release by interacting with host TSG101, a member of the vacuolar protein-sorting pathway and using other cellular host proteins involved in vesicle formation pathway. The budding of the virus progeny occurs after association of protein Z with the viral glycoprotein complex SSP-GP1-GP2 at the cell periphery, step that requires myristoylation of protein Z. Also selectively represses protein production by associating with host eIF4E. In cell-based minigenome assay, has an inhibitory effect on the ribonucleoprotein machinery (vRNP), which is responsible for the replication and transcription of the viral genome. In Homo sapiens (Human), this protein is RING finger protein Z.